The primary structure comprises 405 residues: Arginine biosynthesis bifunctional protein ArgJ (405 aa).

Substrate is bound by residues T152, K178, T189, E276, N400, and S405. The active-site Nucleophile is the T189.

It belongs to the ArgJ family. As to quaternary structure, heterotetramer of two alpha and two beta chains.

Its subcellular location is the cytoplasm. The enzyme catalyses N(2)-acetyl-L-ornithine + L-glutamate = N-acetyl-L-glutamate + L-ornithine. It carries out the reaction L-glutamate + acetyl-CoA = N-acetyl-L-glutamate + CoA + H(+). Its pathway is amino-acid biosynthesis; L-arginine biosynthesis; L-ornithine and N-acetyl-L-glutamate from L-glutamate and N(2)-acetyl-L-ornithine (cyclic): step 1/1. It participates in amino-acid biosynthesis; L-arginine biosynthesis; N(2)-acetyl-L-ornithine from L-glutamate: step 1/4. In terms of biological role, catalyzes two activities which are involved in the cyclic version of arginine biosynthesis: the synthesis of N-acetylglutamate from glutamate and acetyl-CoA as the acetyl donor, and of ornithine by transacetylation between N(2)-acetylornithine and glutamate. The chain is Arginine biosynthesis bifunctional protein ArgJ from Chromobacterium violaceum (strain ATCC 12472 / DSM 30191 / JCM 1249 / CCUG 213 / NBRC 12614 / NCIMB 9131 / NCTC 9757 / MK).